A 276-amino-acid chain; its full sequence is Large ribosomal subunit protein uL2 (276 aa).

Disordered regions lie at residues 37–59 (QIQK…GGHK) and 225–276 (VMNP…RHKR). A compositionally biased stretch (polar residues) spans 39-49 (QKSGRNNNGHI). Over residues 50–59 (TTRHKGGGHK) the composition is skewed to basic residues.

This sequence belongs to the universal ribosomal protein uL2 family. As to quaternary structure, part of the 50S ribosomal subunit. Forms a bridge to the 30S subunit in the 70S ribosome.

One of the primary rRNA binding proteins. Required for association of the 30S and 50S subunits to form the 70S ribosome, for tRNA binding and peptide bond formation. It has been suggested to have peptidyltransferase activity; this is somewhat controversial. Makes several contacts with the 16S rRNA in the 70S ribosome. The polypeptide is Large ribosomal subunit protein uL2 (Ralstonia pickettii (strain 12J)).